Reading from the N-terminus, the 997-residue chain is Signal peptide, CUB and EGF-like domain-containing protein 2 (997 aa).

An N-terminal signal peptide occupies residues 1–28 (MGVAGCGRPREARALLLLLLLLPPLLAA). Positions 43-83 (DVDECAQGLDDCHADALCQNTPTSYKCSCKPGYQGEGRQCE) constitute an EGF-like 1; calcium-binding domain. 8 cysteine pairs are disulfide-bonded: cysteine 47–cysteine 60, cysteine 54–cysteine 69, cysteine 71–cysteine 82, cysteine 88–cysteine 100, cysteine 96–cysteine 109, cysteine 111–cysteine 124, cysteine 130–cysteine 141, and cysteine 137–cysteine 150. The EGF-like 2; calcium-binding domain occupies 84-125 (DMDECDNTLNGGCVHDCLNIPGNYRCTCFDGFMLAHDGHNCL). The 37-residue stretch at 126–162 (DMDECLENNGGCQHICTNVIGSYECRCKEGFFLSDNQ) folds into the EGF-like 3; calcium-binding domain. EGF-like domains lie at 175–211 (CMNK…QKDC), 215–250 (CNHG…GRSC), and 284–319 (CAVN…GKTC). The EGF-like 7; calcium-binding domain occupies 321–361 (DIDECQTRNGGCNHFCKNTVGSFDCSCKKGFKLLTDEKSCQ). Intrachain disulfides connect cysteine 325–cysteine 336, cysteine 332–cysteine 345, cysteine 347–cysteine 360, cysteine 366–cysteine 376, cysteine 372–cysteine 385, cysteine 387–cysteine 399, cysteine 405–cysteine 416, cysteine 412–cysteine 425, and cysteine 427–cysteine 440. One can recognise an EGF-like 8; calcium-binding domain in the interval 362-400 (DVDECSLERTCDHSCINHPGTFICACNPGYTLYSFTHCG). One can recognise an EGF-like 9; calcium-binding domain in the interval 401–441 (DTNECSVNNGGCQQVCINTVGSYECQCHPGFKLHWNKKDCV). The N-linked (GlcNAc...) asparagine glycan is linked to asparagine 657. Cysteine 807 and cysteine 833 form a disulfide bridge. One can recognise a CUB domain in the interval 807 to 919 (CGGELGDFTG…RGFQVPYVTY (113 aa)). The interval 845-854 (ILIVVPEIFL) is interaction with the cholesterol-anchor of SHH. A disulfide bond links cysteine 860 and cysteine 881.

As to quaternary structure, interacts with SHH via the cholesterol anchor of the dually lipid-modified SHH (ShhNp). Interacts with PTCH1. Forms homooligomers and heterooligomers with SCUBE1 and SCUBE3. Interacts with VEGFR2. Post-translationally, N-glycosylated. Expressed in adult heart, lung and testis.

The protein localises to the secreted. It localises to the cell surface. Lipid-binding protein required for SHH long-range signaling by binding to the dually lipid-modified SHH (ShhNp) and by promoting ShhNp mobilization, solubilization and release from the cell membrane. Acts by enhancing the proteolytic processing (shedding) of the lipid-modified N- and C- terminal of ShhNp at the cell surface. Synergizes with DISP1 to cause an increase in SHH secretion. Probable cell surface coreceptor for VEGFR2 involved in VEGFR2-mediated angiogenesis. The protein is Signal peptide, CUB and EGF-like domain-containing protein 2 of Mus musculus (Mouse).